A 270-amino-acid chain; its full sequence is Interleukin-1 beta (270 aa).

The propeptide occupies 1-118 (MATVPEPTSE…VYDDDAFVCD (118 aa)).

The protein belongs to the IL-1 family. Monomer. In its precursor form, weakly interacts with full-length MEFV; the mature cytokine does not interact at all. Interacts with integrins ITGAV:ITGBV and ITGA5:ITGB1; integrin-binding is required for IL1B signaling. Interacts with cargo receptor TMED10; the interaction is direct and is required for the secretion of IL1B mature form. Interacts with HSP90AB1; the interaction facilitates cargo translocation into the ERGIC. Interacts with HSP90B1; the interaction facilitates cargo translocation into the ERGIC.

The protein resides in the cytoplasm. The protein localises to the cytosol. It is found in the secreted. Its subcellular location is the lysosome. It localises to the extracellular exosome. In terms of biological role, potent pro-inflammatory cytokine. Initially discovered as the major endogenous pyrogen, induces prostaglandin synthesis, neutrophil influx and activation, T-cell activation and cytokine production, B-cell activation and antibody production, and fibroblast proliferation and collagen production. Promotes Th17 differentiation of T-cells. Synergizes with IL12/interleukin-12 to induce IFNG synthesis from T-helper 1 (Th1) cells. Plays a role in angiogenesis by inducing VEGF production synergistically with TNF and IL6. Involved in transduction of inflammation downstream of pyroptosis: its mature form is specifically released in the extracellular milieu by passing through the gasdermin-D (GSDMD) pore. This chain is Interleukin-1 beta (IL1B), found in Eumetopias jubatus (Steller sea lion).